Here is a 260-residue protein sequence, read N- to C-terminus: Mediator of RNA polymerase II transcription subunit 8 (260 aa).

It belongs to the Mediator complex subunit 8 family. As to quaternary structure, component of the Mediator complex.

It is found in the nucleus. Component of the Mediator complex, a coactivator involved in the regulated transcription of nearly all RNA polymerase II-dependent genes. Mediator functions as a bridge to convey information from gene-specific regulatory proteins to the basal RNA polymerase II transcription machinery. Mediator is recruited to promoters by direct interactions with regulatory proteins and serves as a scaffold for the assembly of a functional preinitiation complex with RNA polymerase II and the general transcription factors. The protein is Mediator of RNA polymerase II transcription subunit 8 (med8) of Emericella nidulans (strain FGSC A4 / ATCC 38163 / CBS 112.46 / NRRL 194 / M139) (Aspergillus nidulans).